The following is a 408-amino-acid chain: Cell division protein FtsZ 2 (408 aa).

Residues 130 to 132 (GTG), Glu-169, Arg-173, and Asp-216 each bind GTP.

Belongs to the FtsZ family. Homodimer. Polymerizes to form a dynamic ring structure in a strictly GTP-dependent manner. Interacts directly with several other division proteins.

It localises to the cytoplasm. Essential cell division protein that forms a contractile ring structure (Z ring) at the future cell division site. The regulation of the ring assembly controls the timing and the location of cell division. One of the functions of the FtsZ ring is to recruit other cell division proteins to the septum to produce a new cell wall between the dividing cells. Binds GTP and shows GTPase activity. The polypeptide is Cell division protein FtsZ 2 (Pyrococcus furiosus (strain ATCC 43587 / DSM 3638 / JCM 8422 / Vc1)).